Here is a 185-residue protein sequence, read N- to C-terminus: Ribosome-recycling factor (185 aa).

Belongs to the RRF family.

Its subcellular location is the cytoplasm. Responsible for the release of ribosomes from messenger RNA at the termination of protein biosynthesis. May increase the efficiency of translation by recycling ribosomes from one round of translation to another. In Campylobacter jejuni subsp. jejuni serotype O:2 (strain ATCC 700819 / NCTC 11168), this protein is Ribosome-recycling factor.